Consider the following 872-residue polypeptide: HTH-type transcriptional regulator AlkS (872 aa).

The HTH luxR-type domain occupies 805-870 (LTNTQSTITI…RAVSEARLRG (66 aa)). The segment at residues 829-848 (NKEIAERLLITEDTVKWHLK) is a DNA-binding region (H-T-H motif).

It participates in hydrocarbon metabolism; alkane degradation. Its function is as follows. This protein activates the expression of AlkB1 in the presence of alkanes. This chain is HTH-type transcriptional regulator AlkS (alkS), found in Alcanivorax borkumensis (strain ATCC 700651 / DSM 11573 / NCIMB 13689 / SK2).